The primary structure comprises 345 residues: Protein RecA (345 aa).

65–72 serves as a coordination point for ATP; that stretch reads GPESSGKT.

The protein belongs to the RecA family.

It localises to the cytoplasm. Can catalyze the hydrolysis of ATP in the presence of single-stranded DNA, the ATP-dependent uptake of single-stranded DNA by duplex DNA, and the ATP-dependent hybridization of homologous single-stranded DNAs. It interacts with LexA causing its activation and leading to its autocatalytic cleavage. The polypeptide is Protein RecA (Campylobacter fetus subsp. fetus (strain 82-40)).